A 324-amino-acid polypeptide reads, in one-letter code: Beta-ketoacyl-[acyl-carrier-protein] synthase III (324 aa).

Catalysis depends on residues C113 and H251. Residues 252–256 (QANKR) form an ACP-binding region. Residue N281 is part of the active site.

The protein belongs to the thiolase-like superfamily. FabH family. Homodimer.

It is found in the cytoplasm. The catalysed reaction is malonyl-[ACP] + acetyl-CoA + H(+) = 3-oxobutanoyl-[ACP] + CO2 + CoA. Its pathway is lipid metabolism; fatty acid biosynthesis. In terms of biological role, catalyzes the condensation reaction of fatty acid synthesis by the addition to an acyl acceptor of two carbons from malonyl-ACP. Catalyzes the first condensation reaction which initiates fatty acid synthesis and may therefore play a role in governing the total rate of fatty acid production. Possesses both acetoacetyl-ACP synthase and acetyl transacylase activities. Its substrate specificity determines the biosynthesis of branched-chain and/or straight-chain of fatty acids. The sequence is that of Beta-ketoacyl-[acyl-carrier-protein] synthase III from Bartonella tribocorum (strain CIP 105476 / IBS 506).